Here is an 87-residue protein sequence, read N- to C-terminus: Cell division topological specificity factor (87 aa).

The protein belongs to the MinE family.

In terms of biological role, prevents the cell division inhibition by proteins MinC and MinD at internal division sites while permitting inhibition at polar sites. This ensures cell division at the proper site by restricting the formation of a division septum at the midpoint of the long axis of the cell. This chain is Cell division topological specificity factor, found in Chelativorans sp. (strain BNC1).